Here is a 101-residue protein sequence, read N- to C-terminus: Protein S100-A4 (101 aa).

Alanine 2 bears the N-acetylalanine mark. 2 EF-hand domains span residues 12 to 47 and 50 to 85; these read IVSTFHKYSGNEGDKFKLNKTELKELLTRELPSFLG and TDEAAFQKLMNNLDSNRDNEVDFQEYCVFLSCIAMM. The Ca(2+) site is built by lysine 28 and glutamate 33. Lysine 35 is subject to N6-acetyllysine. Aspartate 63, asparagine 65, aspartate 67, glutamate 69, and glutamate 74 together coordinate Ca(2+).

This sequence belongs to the S-100 family. In terms of assembly, homodimer. Interacts with PPFIBP1 in a calcium-dependent mode. Interacts with PGLYRP1; this complex acts as a chemoattractant that promotes lymphocyte movement. Interacts with MYH9; this interaction increases cell motility. Interacts with Annexin 2/ANXA2. Interacts with TP53; this interaction promotes TP53 degradation. Interacts with CCR5 and CXCR3. Interacts with FCGR3A; this interaction inhibits PKC-dependent phosphorylation of FCGR3A.

The protein resides in the secreted. The protein localises to the nucleus. It localises to the cytoplasm. Functionally, calcium-binding protein that plays a role in various cellular processes including motility, angiogenesis, cell differentiation, apoptosis, and autophagy. Increases cell motility and invasiveness by interacting with non-muscle myosin heavy chain (NMMHC) IIA/MYH9. Mechanistically, promotes filament depolymerization and increases the amount of soluble myosin-IIA, resulting in the formation of stable protrusions facilitating chemotaxis. Also modulates the pro-apoptotic function of TP53 by binding to its C-terminal transactivation domain within the nucleus and reducing its protein levels. Within the extracellular space, stimulates cytokine production including granulocyte colony-stimulating factor and CCL24 from T-lymphocytes. In addition, stimulates T-lymphocyte chemotaxis by acting as a chemoattractant complex with PGLYRP1 that promotes lymphocyte migration via CCR5 and CXCR3 receptors. This chain is Protein S100-A4 (S100a4), found in Rattus norvegicus (Rat).